The chain runs to 349 residues: tRNA pseudouridine synthase D (349 aa).

Phe27 contributes to the substrate binding site. Catalysis depends on Asp80, which acts as the Nucleophile. Asn129 provides a ligand contact to substrate. Residues 155–303 (GVPNYFGAQR…VEAARRAMLL (149 aa)) form the TRUD domain. Substrate is bound at residue Phe329.

Belongs to the pseudouridine synthase TruD family.

It carries out the reaction uridine(13) in tRNA = pseudouridine(13) in tRNA. Its function is as follows. Responsible for synthesis of pseudouridine from uracil-13 in transfer RNAs. The chain is tRNA pseudouridine synthase D from Citrobacter koseri (strain ATCC BAA-895 / CDC 4225-83 / SGSC4696).